The primary structure comprises 176 residues: ATP-dependent protease subunit HslV (176 aa).

Thr6 is a catalytic residue. Residues Ser161, Cys164, and Thr167 each coordinate Na(+).

Belongs to the peptidase T1B family. HslV subfamily. In terms of assembly, a double ring-shaped homohexamer of HslV is capped on each side by a ring-shaped HslU homohexamer. The assembly of the HslU/HslV complex is dependent on binding of ATP.

Its subcellular location is the cytoplasm. It catalyses the reaction ATP-dependent cleavage of peptide bonds with broad specificity.. Allosterically activated by HslU binding. Protease subunit of a proteasome-like degradation complex believed to be a general protein degrading machinery. This chain is ATP-dependent protease subunit HslV, found in Thermosipho melanesiensis (strain DSM 12029 / CIP 104789 / BI429).